The following is a 545-amino-acid chain: Protein disulfide isomerase-like 1-3 (545 aa).

Over residues methionine 1 to serine 16 the composition is skewed to pro residues. The interval methionine 1 to serine 24 is disordered. Residues alanine 55–glycine 189 enclose the Thioredoxin 1 domain. Asparagine 87 is a glycosylation site (N-linked (GlcNAc...) asparagine). Residues cysteine 107 and cysteine 110 each act as nucleophile in the active site. Cysteines 107 and 110 form a disulfide. Asparagine 349 is a glycosylation site (N-linked (GlcNAc...) asparagine). The Thioredoxin 2 domain occupies phenylalanine 403–leucine 545. Residues cysteine 453 and cysteine 456 each act as nucleophile in the active site. Residues cysteine 453 and cysteine 456 are joined by a disulfide bond. The Prevents secretion from ER motif lies at lysine 542–leucine 545.

It belongs to the protein disulfide isomerase family.

It localises to the endoplasmic reticulum lumen. It catalyses the reaction Catalyzes the rearrangement of -S-S- bonds in proteins.. In terms of biological role, acts as a protein-folding catalyst that interacts with nascent polypeptides to catalyze the formation, isomerization, and reduction or oxidation of disulfide bonds. May play a role in storage protein biogenesis. This Oryza sativa subsp. japonica (Rice) protein is Protein disulfide isomerase-like 1-3 (PDIL1-3).